The following is a 236-amino-acid chain: Sugar fermentation stimulation protein homolog (236 aa).

Belongs to the SfsA family.

The protein is Sugar fermentation stimulation protein homolog of Gloeobacter violaceus (strain ATCC 29082 / PCC 7421).